A 519-amino-acid polypeptide reads, in one-letter code: MAGQGSQKKKSCDWSKRYVDHLNGKMKCFHLQMSANFGHSMTIPNKFLDHFGGTLSRTIELVSPKGIVYIVKVTEHMNKTILQCGWEAFVDAHHIEENDSLLFRHIENSRFEVLILDSDGCEKVFTCAGIKKTSSVQERNAAPVDISRSTHDETTQSSGSKKFVRCQRASDSQRGKTAKLAETSSSGESGEEGTDSSTSEDESSYELDDPQMPPGRNYVLSRWTSLSEAQEEKVDMLVQDIQPEIPVFVAIMKHSNVNSRRACLVIPKRYASAHFPLESQTITLQRQGKNKKWYPMFYIRKDGSGYMLYGCWKNFVRDNHVKEGDMCIFHLTKFTGGEFGATVHLLRETKSGSLGSFHTSHKRFDLRDGRTWPKVTGVRRVSSRPYLTADRVSLTEEQVRKVEEVVHSIQSEGPMYVSIMNKSNVGTDGLYIIIFGRQFATRYLPEGEQTLTLLMTGKSNAWQVKMRPRSGDAQMITTGWRHFVHDNHLQIEDICLFQLMNDESKLTMTVHIIRRNEKS.

Residues 26 to 119 (MKCFHLQMSA…RFEVLILDSD (94 aa)) constitute a DNA-binding region (TF-B3 1). The tract at residues 138 to 218 (ERNAAPVDIS…DPQMPPGRNY (81 aa)) is disordered. Positions 189 to 209 (SGEEGTDSSTSEDESSYELDD) are enriched in acidic residues. DNA-binding regions (TF-B3) lie at residues 249–349 (VAIM…LRET) and 416–516 (YVSI…IRRN).

It localises to the nucleus. The protein is B3 domain-containing protein Os03g0620400 of Oryza sativa subsp. japonica (Rice).